Reading from the N-terminus, the 150-residue chain is Allograft inflammatory factor 1-like (150 aa).

Residue Ser-2 is modified to N-acetylserine. Ser-2 carries the phosphoserine modification. Residues 47–82 (EKLAAFKEKYMEFDLNNEGEIDLMSLKRMMEKLGVP) form the EF-hand 1 domain. Ca(2+) is bound by residues Asp-60, Asn-62, Glu-64, and Glu-66. Residues 83 to 117 (KTHLEMKKMISEVTGGVSDTISYRDFVNMMLGKRS) form the EF-hand 2; degenerate domain. Residues 129 to 150 (KANESSPKPAGPPPERDIASLP) form a disordered region. Ser-134 bears the Phosphoserine mark.

As to quaternary structure, homodimer (Potential). Monomer.

It localises to the cytoplasm. It is found in the cytoskeleton. The protein localises to the cell projection. The protein resides in the ruffle membrane. Its function is as follows. Actin-binding protein that promotes actin bundling. May neither bind calcium nor depend on calcium for function. This is Allograft inflammatory factor 1-like (Aif1l) from Mus musculus (Mouse).